Here is a 460-residue protein sequence, read N- to C-terminus: Elongation factor 1-alpha (460 aa).

Gly2 bears the N,N,N-trimethylglycine mark. Lys3 is subject to N6,N6-dimethyllysine; alternate. Residue Lys3 is modified to N6-methyllysine; alternate. Residues 5 to 240 (KTHVNLVVIG…DAIEPPVRPS (236 aa)) form the tr-type G domain. Residues 14–21 (GHVDAGKS) form a G1 region. 14–21 (GHVDAGKS) serves as a coordination point for GTP. Lys30 carries the N6-methyllysine modification. The interval 70–74 (GITID) is G2. Lys79 carries the post-translational modification N6,N6,N6-trimethyllysine. The segment at 91-94 (DAPG) is G3. GTP contacts are provided by residues 91 to 95 (DAPGH) and 153 to 156 (NKMD). The interval 153–156 (NKMD) is G4. The tract at residues 192 to 194 (SGW) is G5. Lys317 bears the N6,N6-dimethyllysine; alternate mark. Lys317 bears the N6-methyllysine; alternate mark. Position 391 is an N6-methyllysine (Lys391).

Belongs to the TRAFAC class translation factor GTPase superfamily. Classic translation factor GTPase family. EF-Tu/EF-1A subfamily.

The protein localises to the cytoplasm. In terms of biological role, this protein promotes the GTP-dependent binding of aminoacyl-tRNA to the A-site of ribosomes during protein biosynthesis. This Yarrowia lipolytica (strain CLIB 122 / E 150) (Yeast) protein is Elongation factor 1-alpha (TEF).